The following is a 530-amino-acid chain: Pancreatic secretory granule membrane major glycoprotein GP2 (530 aa).

The signal sequence occupies residues 1 to 21 (MVACDLLWLAAASCLLTLVFP). N-linked (GlcNAc...) asparagine glycosylation occurs at Asn33. Intrachain disulfides connect Cys41–Cys52, Cys56–Cys150, Cys78–Cys168, Cys100–Cys138, Cys106–Cys173, Cys131–Cys139, Cys183–Cys193, Cys187–Cys202, Cys204–Cys234, Cys222–Cys313, and Cys254–Cys277. A D10C region spans residues 54 to 74 (DPCQNHTVLNDPSRSTENTVS). N-linked (GlcNAc...) asparagine glycosylation is found at Asn58 and Asn127. The EGF-like domain maps to 179–223 (APKKCEIACRPEEECVFQNNSWTCVCRQDLNVSDTLSLQPLLDCG). 2 N-linked (GlcNAc...) asparagine glycosylation sites follow: Asn197 and Asn209. The segment at 221-314 (DCGANEIKVK…FLVNVNFQCA (94 aa)) is ZP-N. Residues 221-477 (DCGANEIKVK…PSCSTSRLRS (257 aa)) form the ZP domain. Asn284 and Asn320 each carry an N-linked (GlcNAc...) asparagine glycan. The flexible ZP-N/ZP-C linker stretch occupies residues 315 to 338 (YPLDMNVSLQTALQPIVSSLNVDV). Residues 339-350 (GGAGEFTVTMAL) are internal hydrophobic patch (IHP). Residues 339-477 (GGAGEFTVTM…PSCSTSRLRS (139 aa)) are ZP-C. 3 disulfide bridges follow: Cys394-Cys454, Cys415-Cys470, and Cys459-Cys466. The tract at residues 484–492 (LTRVLDIGP) is external hydrophobic patch (EHP). Asn505 carries the GPI-anchor amidated asparagine lipid modification. The propeptide at 506–530 (GTPRNTGFLLAWPTFFLPVFLAWLF) is removed in mature form.

As to quaternary structure, interacts with SYCN. Interacts with bacterial adhesin fimH. N-glycosylated. As to expression, expressed in pancreas.

The protein localises to the zymogen granule membrane. The protein resides in the secreted. Its subcellular location is the cell membrane. It is found in the apical cell membrane. It localises to the membrane raft. The protein localises to the endosome. Functionally, functions as an intestinal M-cell transcytotic receptor specific of type-I-piliated bacteria that participates in the mucosal immune response toward these bacteria. At the apical membrane of M-cells it binds fimH, a protein of the bacteria type I pilus tip. Internalizes bound bacteria, like E.coli and S.typhimurium, from the lumen of the intestine and delivers them, through M-cells, to the underlying organized lymphoid follicles where they are captured by antigen-presenting dendritic cells to elicit a mucosal immune response. In Rattus norvegicus (Rat), this protein is Pancreatic secretory granule membrane major glycoprotein GP2.